The sequence spans 169 residues: NADH-quinone oxidoreductase subunit B (169 aa).

Positions 45, 46, 111, and 141 each coordinate [4Fe-4S] cluster.

Belongs to the complex I 20 kDa subunit family. As to quaternary structure, NDH-1 is composed of 14 different subunits. Subunits NuoB, C, D, E, F, and G constitute the peripheral sector of the complex. [4Fe-4S] cluster serves as cofactor.

The protein resides in the cell membrane. It carries out the reaction a quinone + NADH + 5 H(+)(in) = a quinol + NAD(+) + 4 H(+)(out). Functionally, NDH-1 shuttles electrons from NADH, via FMN and iron-sulfur (Fe-S) centers, to quinones in the respiratory chain. The immediate electron acceptor for the enzyme in this species is believed to be a menaquinone. Couples the redox reaction to proton translocation (for every two electrons transferred, four hydrogen ions are translocated across the cytoplasmic membrane), and thus conserves the redox energy in a proton gradient. In Clostridium beijerinckii (strain ATCC 51743 / NCIMB 8052) (Clostridium acetobutylicum), this protein is NADH-quinone oxidoreductase subunit B.